Consider the following 429-residue polypeptide: Integral membrane protein GPR137C (429 aa).

The segment covering 1–17 (MRVSVPGPAAAAAPAAG) has biased composition (low complexity). The disordered stretch occupies residues 1–29 (MRVSVPGPAAAAAPAAGREPSTPGGGSGG). The Lumenal segment spans residues 1-48 (MRVSVPGPAAAAAPAAGREPSTPGGGSGGGGAVAAASGAAVPGSVQLA). The helical transmembrane segment at 49–69 (LSVLHALLYAALFAFAYLQLW) threads the bilayer. The Cytoplasmic portion of the chain corresponds to 70-83 (RLLLYRERRLSYQS). The chain crosses the membrane as a helical span at residues 84–104 (LCLFLCLLWAALRTTLFSAAF). Residues 105–120 (SLSGSLPLLRPPAHLH) are Lumenal-facing. Residues 121–141 (FFPHWLLYCFPSCLQFSTLCL) traverse the membrane as a helical segment. Residues 142-167 (LNLYLAEVICKVRCATELDRHKILLH) lie on the Cytoplasmic side of the membrane. Residues 168–188 (LGFIMASLLFLVVNLTCAMLV) form a helical membrane-spanning segment. Residues 189 to 205 (HGDVPENQLKWTVFVRA) lie on the Lumenal side of the membrane. The chain crosses the membrane as a helical span at residues 206 to 226 (LINDSLFILCAISLVCYICKI). The Cytoplasmic portion of the chain corresponds to 227–246 (TKMSSANVYLESKGMSLCQT). A helical membrane pass occupies residues 247–267 (VVVGSVVILLYSSRACYNLVV). The Lumenal portion of the chain corresponds to 268–300 (VTISQDTLESPFNYGWDNLSDKAHVEDISGEEY). Asn285 carries N-linked (GlcNAc...) asparagine glycosylation. The chain crosses the membrane as a helical span at residues 301–321 (IVFGMVLFLWEHVPAWSVVLF). Topologically, residues 322 to 429 (FRAQRLNQNL…HHSLYVTPQN (108 aa)) are cytoplasmic.

The protein belongs to the GPR137 family.

The protein localises to the lysosome membrane. Lysosomal integral membrane protein that may regulate MTORC1 complex translocation to lysosomes. This chain is Integral membrane protein GPR137C (GPR137C), found in Homo sapiens (Human).